Reading from the N-terminus, the 734-residue chain is Photosystem I P700 chlorophyll a apoprotein A2 (734 aa).

8 consecutive transmembrane segments (helical) span residues 46-69 (IFAS…FHVA), 135-158 (LYTG…LHLQ), 175-199 (LNHH…HVAI), 273-291 (IAHH…GHMY), 330-353 (LHFQ…QHMY), 369-395 (AALY…IFFV), 417-439 (AIIS…LYVH), and 517-535 (FLVH…LILV). Residues cysteine 559 and cysteine 568 each contribute to the [4Fe-4S] cluster site. 2 consecutive transmembrane segments (helical) span residues 575-596 (AFYL…YWHW) and 643-665 (LSVW…MFLI). Residues histidine 654, methionine 662, and tyrosine 670 each contribute to the chlorophyll a site. Tryptophan 671 contributes to the phylloquinone binding site. The chain crosses the membrane as a helical span at residues 707-727 (LVGLAHFSVGYVLTYAAFLIA).

It belongs to the PsaA/PsaB family. The PsaA/B heterodimer binds the P700 chlorophyll special pair and subsequent electron acceptors. PSI consists of a core antenna complex that captures photons, and an electron transfer chain that converts photonic excitation into a charge separation. The eukaryotic PSI reaction center is composed of at least 11 subunits. The cofactor is P700 is a chlorophyll a/chlorophyll a' dimer, A0 is one or more chlorophyll a, A1 is one or both phylloquinones and FX is a shared 4Fe-4S iron-sulfur center..

The protein localises to the plastid. It localises to the chloroplast thylakoid membrane. The catalysed reaction is reduced [plastocyanin] + hnu + oxidized [2Fe-2S]-[ferredoxin] = oxidized [plastocyanin] + reduced [2Fe-2S]-[ferredoxin]. Functionally, psaA and PsaB bind P700, the primary electron donor of photosystem I (PSI), as well as the electron acceptors A0, A1 and FX. PSI is a plastocyanin-ferredoxin oxidoreductase, converting photonic excitation into a charge separation, which transfers an electron from the donor P700 chlorophyll pair to the spectroscopically characterized acceptors A0, A1, FX, FA and FB in turn. Oxidized P700 is reduced on the lumenal side of the thylakoid membrane by plastocyanin. The protein is Photosystem I P700 chlorophyll a apoprotein A2 of Chlorokybus atmophyticus (Soil alga).